Here is a 202-residue protein sequence, read N- to C-terminus: MIQPTVKMPKKSVKERQQQVLEVLIGLLNSEDGMQRVTTERLAKAVGVSEGALYRYFPSKTKMFEALIERIEQTLTGYINASKRKENTTASTVKAILYTVIEFARKNPGVTRILTGHALMFEDDQLKARVAKFFDGLEFQFANILQMSKLREGKTFEDERALAGYLVNFCEGQFLRLVRSNFSYNQHQHFEKQWALIKPLFE.

The HTH tetR-type domain maps to 14–75 (KERQQQVLEV…ALIERIEQTL (62 aa)). The segment at residues 38–57 (TTERLAKAVGVSEGALYRYF) is a DNA-binding region (H-T-H motif).

The protein belongs to the nucleoid occlusion factor SlmA family. In terms of assembly, homodimer. Interacts with FtsZ.

The protein resides in the cytoplasm. The protein localises to the nucleoid. In terms of biological role, required for nucleoid occlusion (NO) phenomenon, which prevents Z-ring formation and cell division over the nucleoid. Acts as a DNA-associated cell division inhibitor that binds simultaneously chromosomal DNA and FtsZ, and disrupts the assembly of FtsZ polymers. SlmA-DNA-binding sequences (SBS) are dispersed on non-Ter regions of the chromosome, preventing FtsZ polymerization at these regions. This is Nucleoid occlusion factor SlmA from Actinobacillus pleuropneumoniae serotype 5b (strain L20).